The following is a 620-amino-acid chain: Pentatricopeptide repeat-containing protein At5g66520 (620 aa).

PPR repeat units follow at residues 79–113 (DTFL…SAPH), 114–148 (NAYT…GYEN), 149–179 (DVYA…IPEP), 180–210 (DDVS…MAEK), 211–245 (NAIS…DVEP), 246–280 (DNVS…RIRM), 281–311 (DSVL…IKKK), 312–346 (SVQA…GIKP), 347–382 (NVIT…NLKP), and 383–413 (TIEH…MPLK). Positions 418-493 (IWGALLKACR…VPGCSTISLE (76 aa)) are type E motif. The segment at 494–524 (GTTHEFLAGDRSHPEIEKIQSKWRIMRRKLE) is type E(+) motif. The interval 525–620 (ENGYVPELEE…DGKCSCGDYW (96 aa)) is type DYW motif.

It belongs to the PPR family. PCMP-H subfamily.

This is Pentatricopeptide repeat-containing protein At5g66520 (PCMP-H61) from Arabidopsis thaliana (Mouse-ear cress).